Consider the following 247-residue polypeptide: 3-deoxy-manno-octulosonate cytidylyltransferase (247 aa).

It belongs to the KdsB family.

The protein resides in the cytoplasm. It catalyses the reaction 3-deoxy-alpha-D-manno-oct-2-ulosonate + CTP = CMP-3-deoxy-beta-D-manno-octulosonate + diphosphate. It functions in the pathway nucleotide-sugar biosynthesis; CMP-3-deoxy-D-manno-octulosonate biosynthesis; CMP-3-deoxy-D-manno-octulosonate from 3-deoxy-D-manno-octulosonate and CTP: step 1/1. The protein operates within bacterial outer membrane biogenesis; lipopolysaccharide biosynthesis. Activates KDO (a required 8-carbon sugar) for incorporation into bacterial lipopolysaccharide in Gram-negative bacteria. This Methylobacterium nodulans (strain LMG 21967 / CNCM I-2342 / ORS 2060) protein is 3-deoxy-manno-octulosonate cytidylyltransferase.